The chain runs to 558 residues: MDFFKKEILDWSVYLSLHYIARVCSNSSTSHIIQDYNLIRTYEKVDKTIVDFLSRLPNLFHILEYGENILHIYSMDDANTNIIIFFLDRVLNINKNGSFIHNLRLSSSINIKEYVYQLVNNDHPDNRIRLMLENGRRTRHFLSYISDTVNIYICILINHGFYIDAEDSYGCTLLHRCIYHYKKSESESYNELIKILLNNGSDVDKKDTYGNTPFILLCKHDINNVELFEICLENANIDSVDFNRYTPLHYVSCRNKYDFVKLLISKGANVNARNKFGTTPFYCGIIHGISLIKLYLESDTELEIDNEHIVRHLIIFDAVESLDYLLSRGVIDINYRTIYNETSIYDAVSYNAYNTLVYLLNRNGDFETITTSGCTCISEAVANNNKIIMEVLLSKRPSLKIMIQSMIAITKNKQHNADLLKMCIKYTACMTDYDTLIDVQSLQQYKWYILKCFDEIDIMKRCYIKNKTVFQLVFCIKDINTLMRYGKHPSFVKCTSLDVYGSRVRNIIASIRYRQRLISLLSKKLDAGDKWSCFPNEIKYKILENFNDNELSTYLKIL.

ANK repeat units follow at residues 65–95, 169–205, 209–239, 243–272, 276–304, 339–368, and 372–401; these read YGEN…NINK, YGCT…DVDK, YGNT…NIDS, NRYT…NVNA, FGTT…ELEI, YNET…DFET, and SGCT…SLKI.

The protein belongs to the orthopoxvirus OPG189 protein family.

In terms of biological role, contributes to viral release without involving rearrangement of host actin. The chain is Ankyrin repeat protein OPG189 (OPG189) from Homo sapiens (Human).